The following is a 349-amino-acid chain: Rhodopsin (349 aa).

Over 1 to 33 (TEGPYFYIPMSNATGVVRSPYEYPQYYLVYPAA) the chain is Extracellular. Residue asparagine 12 is glycosylated (N-linked (GlcNAc...) asparagine). Residues 34–58 (FAVLGAYMFFLIIFGFPVNFLTLYV) traverse the membrane as a helical segment. Topologically, residues 59 to 70 (TIEHKKLRTPLN) are cytoplasmic. A helical transmembrane segment spans residues 71 to 93 (YILLNLAVADLFMVIGGFTTTIY). Residues 94–107 (TSMHGYFVLGRLGC) are Extracellular-facing. Cysteine 107 and cysteine 184 form a disulfide bridge. Residues 108–130 (NLEGFSATLGGMISLWSLVVLAV) form a helical membrane-spanning segment. Residues 131-133 (ERW) carry the 'Ionic lock' involved in activated form stabilization motif. Topologically, residues 131-149 (ERWVVVCKPMSNFRFGENH) are cytoplasmic. Residues 150–170 (AIMGVTLTWAMGLACTVPPLV) traverse the membrane as a helical segment. At 171–199 (GWSRYIPEGMQCSCGIDYYTRAEGFNNES) the chain is on the extracellular side. Asparagine 197 is a glycosylation site (N-linked (GlcNAc...) asparagine). Residues 200 to 221 (FVLYMFVCHFSFPLVVIFFCYG) form a helical membrane-spanning segment. Residues 222–249 (RLLCAVKEAAAAQQESETTQRAEREVTR) are Cytoplasmic-facing. Residues 250-271 (MVILMVIGFLVCWLPYASVAWY) traverse the membrane as a helical segment. At 272-283 (IFTHQGSEFGPL) the chain is on the extracellular side. Residues 284–305 (FMTIPAFFAKSSAIYNPVIYIC) form a helical membrane-spanning segment. Lysine 293 carries the N6-(retinylidene)lysine modification. Residues 306 to 349 (LNKQFRQCMLTTLFCGKNPFEEEEGASSTKTEASSASSSSVSPA) lie on the Cytoplasmic side of the membrane. Cysteine 320 carries S-palmitoyl cysteine lipidation. The segment at 326–349 (EEEEGASSTKTEASSASSSSVSPA) is disordered. Residues 331–349 (ASSTKTEASSASSSSVSPA) are compositionally biased toward low complexity.

It belongs to the G-protein coupled receptor 1 family. Opsin subfamily. Post-translationally, phosphorylated on some or all of the serine and threonine residues present in the C-terminal region. Contains one covalently linked retinal chromophore.

The protein localises to the membrane. It is found in the cell projection. Its subcellular location is the cilium. It localises to the photoreceptor outer segment. Photoreceptor required for image-forming vision at low light intensity. While most salt water fish species use retinal as chromophore, most freshwater fish use 3-dehydroretinal, or a mixture of retinal and 3-dehydroretinal. Light-induced isomerization of 11-cis to all-trans retinal triggers a conformational change that activates signaling via G-proteins. Subsequent receptor phosphorylation mediates displacement of the bound G-protein alpha subunit by arrestin and terminates signaling. The chain is Rhodopsin (rho) from Myripristis berndti (Bigscale soldierfish).